The primary structure comprises 204 residues: Holliday junction resolvase RecU (204 aa).

Mg(2+) is bound by residues threonine 89, aspartate 91, aspartate 104, and glutamine 123.

Belongs to the RecU family. Requires Mg(2+) as cofactor.

The protein resides in the cytoplasm. The enzyme catalyses Endonucleolytic cleavage at a junction such as a reciprocal single-stranded crossover between two homologous DNA duplexes (Holliday junction).. Functionally, endonuclease that resolves Holliday junction intermediates in genetic recombination. Cleaves mobile four-strand junctions by introducing symmetrical nicks in paired strands. Promotes annealing of linear ssDNA with homologous dsDNA. Required for DNA repair, homologous recombination and chromosome segregation. The protein is Holliday junction resolvase RecU of Leuconostoc mesenteroides subsp. mesenteroides (strain ATCC 8293 / DSM 20343 / BCRC 11652 / CCM 1803 / JCM 6124 / NCDO 523 / NBRC 100496 / NCIMB 8023 / NCTC 12954 / NRRL B-1118 / 37Y).